The primary structure comprises 334 residues: Probable tRNA pseudouridine synthase B (334 aa).

Residue Asp82 is the Nucleophile of the active site. Residues 250 to 325 (LPKVWIRDSA…IAVDVDKVFM (76 aa)) enclose the PUA domain.

It belongs to the pseudouridine synthase TruB family. Type 2 subfamily.

The enzyme catalyses uridine(55) in tRNA = pseudouridine(55) in tRNA. Could be responsible for synthesis of pseudouridine from uracil-55 in the psi GC loop of transfer RNAs. The protein is Probable tRNA pseudouridine synthase B of Thermococcus gammatolerans (strain DSM 15229 / JCM 11827 / EJ3).